Consider the following 504-residue polypeptide: UNC93-like protein C922.05c (504 aa).

The next 11 helical transmembrane spans lie at 64-84 (IIVS…SGLG), 97-116 (ANVA…GSIC), 123-145 (LTLA…YKHV), 149-169 (GFVI…WAAQ), 186-206 (IAIF…VPLA), 219-239 (GTYA…LFMV), 275-293 (YWVL…FTTY), 310-330 (LNNL…ALFL), 343-363 (VGWG…LAFQ), 391-411 (FLYI…YWII), and 452-472 (YFAS…PVIW).

Belongs to the unc-93 family.

Its subcellular location is the cytoplasm. The protein localises to the membrane. This chain is UNC93-like protein C922.05c, found in Schizosaccharomyces pombe (strain 972 / ATCC 24843) (Fission yeast).